A 173-amino-acid polypeptide reads, in one-letter code: Small ribosomal subunit protein uS5 (173 aa).

The S5 DRBM domain occupies 17–80 (LREKMIAVNR…EESRRNMIKV (64 aa)).

Belongs to the universal ribosomal protein uS5 family. In terms of assembly, part of the 30S ribosomal subunit. Contacts proteins S4 and S8.

With S4 and S12 plays an important role in translational accuracy. Its function is as follows. Located at the back of the 30S subunit body where it stabilizes the conformation of the head with respect to the body. The protein is Small ribosomal subunit protein uS5 of Delftia acidovorans (strain DSM 14801 / SPH-1).